The following is a 210-amino-acid chain: RNA binding protein, mRNA processing factor 2 (210 aa).

Residues 1–10 show a composition bias toward basic and acidic residues; that stretch reads MSNLKPDVEH. Positions 1-25 are disordered; the sequence is MSNLKPDVEHCTGAGTGTGTGPSGP. Position 2 is an N-acetylserine (Ser-2). The RRM domain maps to 31–108; the sequence is RTLFVSGLPV…QTLRLEFAKA (78 aa). Residues 41–51 are important for homodimerization; the sequence is DIKPRELYLLF.

In terms of assembly, homodimer. Interacts with EEF2.

Its subcellular location is the cytoplasm. It localises to the nucleus. The protein localises to the stress granule. RNA-binding protein involved in the regulation of smooth muscle cell differentiation and proliferation in the gastrointestinal system. Binds NOG mRNA, the major inhibitor of the bone morphogenetic protein (BMP) pathway. Mediates an increase of NOG mRNA levels, thereby contributing to the negative regulation of BMP signaling pathway and promoting reversible dedifferentiation and proliferation of smooth muscle cells. Acts as a pre-mRNA alternative splicing regulator. Mediates ACTN1 and FLNB alternative splicing. Likely binds to mRNA tandem CAC trinucleotide or CA dinucleotide motifs. This Rattus norvegicus (Rat) protein is RNA binding protein, mRNA processing factor 2 (Rbpms2).